The following is a 294-amino-acid chain: Acetyl-coenzyme A carboxylase carboxyl transferase subunit beta (294 aa).

A CoA carboxyltransferase N-terminal domain is found at Val25–Asp294. Cys29, Cys32, Cys48, and Cys51 together coordinate Zn(2+). A C4-type zinc finger spans residues Cys29 to Cys51.

It belongs to the AccD/PCCB family. Acetyl-CoA carboxylase is a heterohexamer composed of biotin carboxyl carrier protein (AccB), biotin carboxylase (AccC) and two subunits each of ACCase subunit alpha (AccA) and ACCase subunit beta (AccD). It depends on Zn(2+) as a cofactor.

The protein resides in the cytoplasm. The catalysed reaction is N(6)-carboxybiotinyl-L-lysyl-[protein] + acetyl-CoA = N(6)-biotinyl-L-lysyl-[protein] + malonyl-CoA. It participates in lipid metabolism; malonyl-CoA biosynthesis; malonyl-CoA from acetyl-CoA: step 1/1. Its function is as follows. Component of the acetyl coenzyme A carboxylase (ACC) complex. Biotin carboxylase (BC) catalyzes the carboxylation of biotin on its carrier protein (BCCP) and then the CO(2) group is transferred by the transcarboxylase to acetyl-CoA to form malonyl-CoA. The sequence is that of Acetyl-coenzyme A carboxylase carboxyl transferase subunit beta from Actinobacillus succinogenes (strain ATCC 55618 / DSM 22257 / CCUG 43843 / 130Z).